Consider the following 356-residue polypeptide: Heparan sulfate 2-O-sulfotransferase 1 (356 aa).

At 1–11 the chain is on the cytoplasmic side; the sequence is MGLLRIMMPPK. Residues 12–28 form a helical; Signal-anchor for type II membrane protein membrane-spanning segment; that stretch reads LQLLAVVAFAVAMLFLE. Positions 24-51 form a coiled coil; that stretch reads MLFLENQIQKLEESRSKLERAIARHEVR. Residues 29 to 356 lie on the Lumenal side of the membrane; it reads NQIQKLEESR…FYEKIYPKSN (328 aa). Adenosine 3',5'-bisphosphate is bound by residues lysine 83, threonine 84, alanine 85, serine 86, threonine 87, and serine 88. N-linked (GlcNAc...) asparagine glycans are attached at residues asparagine 108 and asparagine 127. Residues histidine 140 and histidine 142 contribute to the active site. Arginine 164 and serine 172 together coordinate adenosine 3',5'-bisphosphate. Disulfide bonds link cysteine 201–cysteine 209 and cysteine 222–cysteine 228. Positions 279, 285, 290, and 293 each coordinate adenosine 3',5'-bisphosphate.

Belongs to the sulfotransferase 3 family. In terms of assembly, homotrimer. Interacts with the C5-epimerase GLCE. In terms of processing, N-glycosylated.

The protein resides in the golgi apparatus membrane. Catalyzes the transfer of a sulfo group from 3'-phospho-5'-adenylyl sulfate (PAPS) to the 2-OH position of iduronic acid (IdoA) or glucuronic acid (GlcA) within the heparan sulfate (HS) chain and participates in HS biosynthesis. Required for metanephric development of kidney formation, suggesting that 2-O-sulfation within HS is essential for signaling between ureteric bud and metanephric mesenchyme. This chain is Heparan sulfate 2-O-sulfotransferase 1, found in Homo sapiens (Human).